The sequence spans 804 residues: Phenylalanine--tRNA ligase beta subunit (804 aa).

One can recognise a tRNA-binding domain in the interval 38–148 (RSSLKGFVIA…EDAPIGGLFA (111 aa)). Residues 401-476 (PEIKQIAFPF…RIYGLDKIEP (76 aa)) enclose the B5 domain. Mg(2+) is bound by residues D454, D460, E463, and E464. The FDX-ACB domain maps to 710-803 (SPFQMVRRDF…VTKATGAYLR (94 aa)).

The protein belongs to the phenylalanyl-tRNA synthetase beta subunit family. Type 1 subfamily. As to quaternary structure, tetramer of two alpha and two beta subunits. It depends on Mg(2+) as a cofactor.

It localises to the cytoplasm. The catalysed reaction is tRNA(Phe) + L-phenylalanine + ATP = L-phenylalanyl-tRNA(Phe) + AMP + diphosphate + H(+). The chain is Phenylalanine--tRNA ligase beta subunit from Bartonella quintana (strain Toulouse) (Rochalimaea quintana).